Reading from the N-terminus, the 337-residue chain is Anthranilate phosphoribosyltransferase (337 aa).

Residues Gly81, 84–85 (GD), Thr89, 91–94 (NIST), 109–117 (KHGNRALSS), and Thr121 each bind 5-phospho-alpha-D-ribose 1-diphosphate. Gly81 is an anthranilate binding site. Mg(2+) is bound at residue Ser93. Anthranilate is bound at residue Asn112. Arg167 is a binding site for anthranilate. Mg(2+)-binding residues include Asp225 and Glu226.

Belongs to the anthranilate phosphoribosyltransferase family. As to quaternary structure, homodimer. Mg(2+) serves as cofactor.

The enzyme catalyses N-(5-phospho-beta-D-ribosyl)anthranilate + diphosphate = 5-phospho-alpha-D-ribose 1-diphosphate + anthranilate. It functions in the pathway amino-acid biosynthesis; L-tryptophan biosynthesis; L-tryptophan from chorismate: step 2/5. Catalyzes the transfer of the phosphoribosyl group of 5-phosphorylribose-1-pyrophosphate (PRPP) to anthranilate to yield N-(5'-phosphoribosyl)-anthranilate (PRA). This Sinorhizobium medicae (strain WSM419) (Ensifer medicae) protein is Anthranilate phosphoribosyltransferase.